A 286-amino-acid polypeptide reads, in one-letter code: Pre-mRNA-processing protein 45 (286 aa).

2 disordered regions span residues Thr111–Lys146 and Lys253–Tyr286. Low complexity predominate over residues Pro132–Ser145. Basic and acidic residues predominate over residues Lys253–Asn279.

Belongs to the SNW family. As to quaternary structure, associated with the spliceosome.

It is found in the nucleus. Functionally, involved in pre-mRNA splicing. This chain is Pre-mRNA-processing protein 45 (PRP45), found in Candida albicans (strain SC5314 / ATCC MYA-2876) (Yeast).